A 566-amino-acid polypeptide reads, in one-letter code: Good for full DBP5 activity protein 2 (566 aa).

Residues 1–16 (MQVQKMVRDNSNNGSD) show a composition bias toward polar residues. The tract at residues 1-41 (MQVQKMVRDNSNNGSDKSVHWERRNNNGAGPRYRSRSGNTG) is disordered.

Functionally, high-copy suppressor of DBP5 mutation. This chain is Good for full DBP5 activity protein 2 (GFD2), found in Saccharomyces cerevisiae (strain ATCC 204508 / S288c) (Baker's yeast).